The sequence spans 186 residues: Ribosome-recycling factor (186 aa).

It belongs to the RRF family.

The protein resides in the cytoplasm. Responsible for the release of ribosomes from messenger RNA at the termination of protein biosynthesis. May increase the efficiency of translation by recycling ribosomes from one round of translation to another. This Cytophaga hutchinsonii (strain ATCC 33406 / DSM 1761 / CIP 103989 / NBRC 15051 / NCIMB 9469 / D465) protein is Ribosome-recycling factor.